We begin with the raw amino-acid sequence, 338 residues long: Ketol-acid reductoisomerase (NADP(+)) (338 aa).

Residues 1-181 (MRVFYDKDCD…GGGRTGIIET (181 aa)) enclose the KARI N-terminal Rossmann domain. NADP(+)-binding positions include 24–27 (YGSQ), arginine 47, serine 50, threonine 52, and 82–85 (DEFQ). Histidine 107 is a catalytic residue. Glycine 133 contributes to the NADP(+) binding site. Residues 182 to 327 (TFKDETETDL…EKLRAMMPWI (146 aa)) enclose the KARI C-terminal knotted domain. Positions 190, 194, 226, and 230 each coordinate Mg(2+). Position 251 (serine 251) interacts with substrate.

It belongs to the ketol-acid reductoisomerase family. It depends on Mg(2+) as a cofactor.

It catalyses the reaction (2R)-2,3-dihydroxy-3-methylbutanoate + NADP(+) = (2S)-2-acetolactate + NADPH + H(+). It carries out the reaction (2R,3R)-2,3-dihydroxy-3-methylpentanoate + NADP(+) = (S)-2-ethyl-2-hydroxy-3-oxobutanoate + NADPH + H(+). It participates in amino-acid biosynthesis; L-isoleucine biosynthesis; L-isoleucine from 2-oxobutanoate: step 2/4. It functions in the pathway amino-acid biosynthesis; L-valine biosynthesis; L-valine from pyruvate: step 2/4. Its function is as follows. Involved in the biosynthesis of branched-chain amino acids (BCAA). Catalyzes an alkyl-migration followed by a ketol-acid reduction of (S)-2-acetolactate (S2AL) to yield (R)-2,3-dihydroxy-isovalerate. In the isomerase reaction, S2AL is rearranged via a Mg-dependent methyl migration to produce 3-hydroxy-3-methyl-2-ketobutyrate (HMKB). In the reductase reaction, this 2-ketoacid undergoes a metal-dependent reduction by NADPH to yield (R)-2,3-dihydroxy-isovalerate. This is Ketol-acid reductoisomerase (NADP(+)) from Pseudomonas paraeruginosa (strain DSM 24068 / PA7) (Pseudomonas aeruginosa (strain PA7)).